The chain runs to 360 residues: uncharacterized protein (360 aa).

7 helical membrane passes run 26–48, 58–80, 89–111, 126–148, 169–191, 195–214, and 227–249; these read SVCY…SGAT, LHPL…ASVL, VMGL…NIAH, LSTG…SILA, RLAY…PTAL, IPSV…YALL, and CALC…SHMV.

It is found in the cell membrane. This is an uncharacterized protein from Treponema pallidum (strain Nichols).